The chain runs to 404 residues: Serine/threonine transporter SstT (404 aa).

Transmembrane regions (helical) follow at residues 17–37 (IGIG…LTGF), 39–59 (ILGK…VFAL), 75–95 (MTLI…VAVL), 138–158 (ALAT…GLAL), 179–199 (IVVW…FTTI), 212–232 (FLIL…NPLI), 287–307 (IPLG…VLTL), and 313–333 (FGIP…AVSA).

Belongs to the dicarboxylate/amino acid:cation symporter (DAACS) (TC 2.A.23) family.

It localises to the cell membrane. It carries out the reaction L-serine(in) + Na(+)(in) = L-serine(out) + Na(+)(out). The catalysed reaction is L-threonine(in) + Na(+)(in) = L-threonine(out) + Na(+)(out). In terms of biological role, involved in the import of serine and threonine into the cell, with the concomitant import of sodium (symport system). This chain is Serine/threonine transporter SstT, found in Streptococcus pyogenes serotype M2 (strain MGAS10270).